Reading from the N-terminus, the 328-residue chain is Beta-ketoacyl-[acyl-carrier-protein] synthase III (328 aa).

Residues cysteine 114 and histidine 253 contribute to the active site. An ACP-binding region spans residues 254–258 (QANIR). Asparagine 283 is an active-site residue.

Belongs to the thiolase-like superfamily. FabH family. In terms of assembly, homodimer.

It localises to the cytoplasm. It catalyses the reaction malonyl-[ACP] + acetyl-CoA + H(+) = 3-oxobutanoyl-[ACP] + CO2 + CoA. It functions in the pathway lipid metabolism; fatty acid biosynthesis. Catalyzes the condensation reaction of fatty acid synthesis by the addition to an acyl acceptor of two carbons from malonyl-ACP. Catalyzes the first condensation reaction which initiates fatty acid synthesis and may therefore play a role in governing the total rate of fatty acid production. Possesses both acetoacetyl-ACP synthase and acetyl transacylase activities. Its substrate specificity determines the biosynthesis of branched-chain and/or straight-chain of fatty acids. This is Beta-ketoacyl-[acyl-carrier-protein] synthase III from Clostridioides difficile (strain 630) (Peptoclostridium difficile).